Here is a 547-residue protein sequence, read N- to C-terminus: Membrane protein insertase YidC (547 aa).

Residues 8–28 (LRLILAIALSFLFIALYSYFF) traverse the membrane as a helical segment. Residues 37–50 (QTTKQETTNNHTAT) are compositionally biased toward low complexity. Positions 37–62 (QTTKQETTNNHTATSPNAPNAQHFST) are disordered. Residues 51–62 (SPNAPNAQHFST) are compositionally biased toward polar residues. A run of 5 helical transmembrane segments spans residues 325–345 (VIEYGLITFFAKGVFVLLDYL), 348–368 (FVGNWGWAIILLTIIVRIILY), 414–434 (GANPLGGCLPLILQIPVFFAI), 449–469 (WILWIHDLSIMDPYFILPLLM), and 495–515 (LLPLLFTIFLITFPAGLVLYW).

Belongs to the OXA1/ALB3/YidC family. Type 1 subfamily. Interacts with the Sec translocase complex via SecD. Specifically interacts with transmembrane segments of nascent integral membrane proteins during membrane integration.

It localises to the cell inner membrane. In terms of biological role, required for the insertion and/or proper folding and/or complex formation of integral membrane proteins into the membrane. Involved in integration of membrane proteins that insert both dependently and independently of the Sec translocase complex, as well as at least some lipoproteins. Aids folding of multispanning membrane proteins. The polypeptide is Membrane protein insertase YidC (Helicobacter pylori (strain ATCC 700392 / 26695) (Campylobacter pylori)).